Here is a 713-residue protein sequence, read N- to C-terminus: Signal transducer and activator of transcription 1 (713 aa).

Residues 477-574 (WCIGFISKHD…EEMLRYFESE (98 aa)) form the SH2 domain.

Belongs to the transcription factor STAT family. In terms of assembly, forms a homodimer or a heterodimer with a related family member.

It is found in the cytoplasm. It localises to the nucleus. Functionally, carries out a dual function: signal transduction and activation of transcription. Activated STAT proteins play a role in repression of dauer formation. Neuronal expression is held in check by negative signals through the TGF-beta pathway that target the daf-3 transcription factor. In Caenorhabditis briggsae, this protein is Signal transducer and activator of transcription 1.